The chain runs to 237 residues: Small ribosomal subunit protein uS3 (237 aa).

In terms of domain architecture, KH type-2 spans V39–R107.

This sequence belongs to the universal ribosomal protein uS3 family. In terms of assembly, part of the 30S ribosomal subunit. Forms a tight complex with proteins S10 and S14.

Its function is as follows. Binds the lower part of the 30S subunit head. Binds mRNA in the 70S ribosome, positioning it for translation. This Aeromonas hydrophila subsp. hydrophila (strain ATCC 7966 / DSM 30187 / BCRC 13018 / CCUG 14551 / JCM 1027 / KCTC 2358 / NCIMB 9240 / NCTC 8049) protein is Small ribosomal subunit protein uS3.